We begin with the raw amino-acid sequence, 317 residues long: Glutaminase (317 aa).

7 residues coordinate substrate: S67, N118, E162, N169, Y193, Y245, and V263.

This sequence belongs to the glutaminase family. In terms of assembly, homotetramer.

The catalysed reaction is L-glutamine + H2O = L-glutamate + NH4(+). The chain is Glutaminase from Brucella abortus (strain S19).